The sequence spans 331 residues: Probable tRNA-dihydrouridine synthase (331 aa).

FMN-binding positions include 17-19 and Q72; that span reads PMS. C102 acts as the Proton donor in catalysis. Residues K141, 202–204, and 226–227 each bind FMN; these read NGD and GR.

Belongs to the Dus family. FMN serves as cofactor.

It carries out the reaction a 5,6-dihydrouridine in tRNA + NAD(+) = a uridine in tRNA + NADH + H(+). The catalysed reaction is a 5,6-dihydrouridine in tRNA + NADP(+) = a uridine in tRNA + NADPH + H(+). Its function is as follows. Catalyzes the synthesis of 5,6-dihydrouridine (D), a modified base found in the D-loop of most tRNAs, via the reduction of the C5-C6 double bond in target uridines. This Rickettsia conorii (strain ATCC VR-613 / Malish 7) protein is Probable tRNA-dihydrouridine synthase (dus).